Reading from the N-terminus, the 349-residue chain is Peptide chain release factor 1 (349 aa).

Position 233 is an N5-methylglutamine (Gln233).

The protein belongs to the prokaryotic/mitochondrial release factor family. Methylated by PrmC. Methylation increases the termination efficiency of RF1.

Its subcellular location is the cytoplasm. Peptide chain release factor 1 directs the termination of translation in response to the peptide chain termination codons UAG and UAA. The polypeptide is Peptide chain release factor 1 (Pelotomaculum thermopropionicum (strain DSM 13744 / JCM 10971 / SI)).